A 327-amino-acid polypeptide reads, in one-letter code: Microtubule-associated protein RP/EB family member 2 (327 aa).

Residues 1-21 (MPGPTQTLSPNGENNNDIIQD) are disordered. S9 carries the phosphoserine modification. Residues 57–159 (TMSRHDIIAW…FIQWFKKFYD (103 aa)) enclose the Calponin-homology (CH) domain. The residue at position 167 (Y167) is a Phosphotyrosine. Disordered stretches follow at residues 171–240 (EARQ…DKDL) and 299–327 (ASEEHEGHTEEPEAEEQAHEQQPPQQEEY). Residues 187–327 (QIFNLPKKSH…EQQPPQQEEY (141 aa)) form a DCTN1-binding region. Positions 200-234 (SPTAGAAKSSPAAKPGSTPSRPSSAKRASSSGSAS) are enriched in low complexity. S219 is subject to Phosphoserine. The EB1 C-terminal domain occupies 236–306 (SDKDLETQVI…LYASEEHEGH (71 aa)). The tract at residues 259 to 302 (EGVEKERDFYFGKLREIELLCQEHGQENDDLVQRLMDVLYASEE) is APC-binding. Positions 300 to 317 (SEEHEGHTEEPEAEEQAH) are enriched in basic and acidic residues. The segment covering 318 to 327 (EQQPPQQEEY) has biased composition (low complexity).

Belongs to the MAPRE family. In terms of assembly, interacts with DCTN1. Interacts with APC (via C-terminal). Interacts with monomeric and polymerized tubulin. Interacts with SLAIN1. Interacts (via the N-terminal region) with BAG1.

The protein localises to the cytoplasm. It localises to the cytoskeleton. Its function is as follows. May be involved in microtubule polymerization, and spindle function by stabilizing microtubules and anchoring them at centrosomes. May play a role in cell migration. In Pongo abelii (Sumatran orangutan), this protein is Microtubule-associated protein RP/EB family member 2 (MAPRE2).